A 396-amino-acid polypeptide reads, in one-letter code: NAD(P)H oxidoreductase RTN4IP1, mitochondrial (396 aa).

The N-terminal 40 residues, M1–S40, are a transit peptide targeting the mitochondrion. Positions G52–I393 constitute an Enoyl reductase (ER) domain. NADPH contacts are provided by S214, G216, V217, S237, Y255, N276, L300, A341, F343, H386, A387, and R388.

This sequence belongs to the zinc-containing alcohol dehydrogenase family. Quinone oxidoreductase subfamily. In terms of assembly, interacts with RTN4, UQCRC1 and UQCRC2.

Its subcellular location is the mitochondrion matrix. The protein localises to the mitochondrion outer membrane. The enzyme catalyses a 3-demethylubiquinone + NADH + 2 H(+) = a 3-demethylubiquinol + NAD(+). The catalysed reaction is a 3-demethylubiquinone + NADPH + 2 H(+) = a 3-demethylubiquinol + NADP(+). It catalyses the reaction 3-demethylubiquinone-10 + NADH + 2 H(+) = 3-demethylubiquinol-10 + NAD(+). It carries out the reaction 3-demethylubiquinone-10 + NADPH + 2 H(+) = 3-demethylubiquinol-10 + NADP(+). The protein operates within cofactor biosynthesis; ubiquinone biosynthesis. NAD(P)H oxidoreductase involved in the ubiquinone biosynthetic pathway. Required for the O-methyltransferase activity of COQ3. Able to catalyze the oxidoreduction of 3-demethylubiquinone into 3-demethylubiquinol in vitro. However, it is unclear if 3-demethylubiquinone constitutes a substrate in vivo. May also play a role in the regulation of retinal ganglion cell (RGC) neurite outgrowth, and hence in the development of the inner retina and optic nerve. Appears to be a potent inhibitor of regeneration following spinal cord injury. The chain is NAD(P)H oxidoreductase RTN4IP1, mitochondrial (RTN4IP1) from Bos taurus (Bovine).